Here is a 296-residue protein sequence, read N- to C-terminus: Nucleotide-binding protein SSA_0810 (296 aa).

Position 13–20 (13–20 (GMSGAGKT)) interacts with ATP. A GTP-binding site is contributed by 63-66 (DMRS). Residues 277 to 296 (WPVNSSHRDKNRRKETVNRS) are disordered. Residues 282 to 296 (SHRDKNRRKETVNRS) show a composition bias toward basic and acidic residues.

The protein belongs to the RapZ-like family.

Displays ATPase and GTPase activities. This is Nucleotide-binding protein SSA_0810 from Streptococcus sanguinis (strain SK36).